Consider the following 470-residue polypeptide: Acetyl-CoA decarbonylase/synthase complex subunit beta 2 (470 aa).

Residues Cys190, Cys193, Cys279, and Cys281 each coordinate [Ni-Fe-S] cluster.

It belongs to the CdhC family. As to quaternary structure, monomer. The ACDS complex is made up of alpha, epsilon, beta, gamma and delta chains with a probable stoichiometry of (alpha(2)epsilon(2))(4)-beta(8)-(gamma(1)delta(1))(8) (Potential). It depends on [Ni-Fe-S] cluster as a cofactor.

It catalyses the reaction Co(I)-[corrinoid Fe-S protein] + acetyl-CoA + H(+) = methyl-Co(III)-[corrinoid Fe-S protein] + CO + CoA. Its pathway is one-carbon metabolism; methanogenesis from acetate. In terms of biological role, part of a complex that catalyzes the reversible cleavage of acetyl-CoA, allowing growth on acetate as sole source of carbon and energy. The alpha-epsilon complex generates CO from CO(2), while the beta subunit (this protein) combines the CO with CoA and a methyl group to form acetyl-CoA. The methyl group, which is incorporated into acetyl-CoA, is transferred to the beta subunit by a corrinoid iron-sulfur protein (the gamma-delta complex). The protein is Acetyl-CoA decarbonylase/synthase complex subunit beta 2 (cdhC2) of Methanosarcina mazei (strain ATCC BAA-159 / DSM 3647 / Goe1 / Go1 / JCM 11833 / OCM 88) (Methanosarcina frisia).